The following is a 677-amino-acid chain: Potassium channel KAT1 (677 aa).

At 1–63 (MSISWTRNFF…PFNPRYRAWE (63 aa)) the chain is on the cytoplasmic side. The chain crosses the membrane as a helical span at residues 64–84 (MWLVLLVIYSAWICPFQFAFI). The Extracellular portion of the chain corresponds to 85–90 (TYKKDA). The chain crosses the membrane as a helical span at residues 91-111 (IFIIDNIVNGFFAIDIILTFF). At 112–134 (VAYLDSHSYLLVDSPKKIAIRYL) the chain is on the cytoplasmic side. The chain crosses the membrane as a helical span at residues 135–155 (STWFAFDVCSTAPFQPLSLLF). The Extracellular segment spans residues 156-165 (NYNGSELGFR). A helical; Voltage-sensor membrane pass occupies residues 166 to 186 (ILSMLRLWRLRRVSSLFARLE). Residues 187–200 (KDIRFNYFWIRCTK) are Cytoplasmic-facing. A helical transmembrane segment spans residues 201–221 (LISVTLFAIHCAGCFNYLIAD). At 222-248 (RYPNPRKTWIGAVYPNFKEASLWNRYV) the chain is on the extracellular side. The pore-forming intramembrane region spans 249-268 (TALYWSITTLTTTGYGDFHA). The Extracellular segment spans residues 269–272 (ENPR). A helical transmembrane segment spans residues 273-293 (EMLFDIFFMMFNLGLTAYLIG). At 294–677 (NMTNLVVHWT…DGDHLYFSSN (384 aa)) the chain is on the cytoplasmic side. Position 377 to 496 (377 to 496 (LFQGVSRNFL…RVIMNNLFMK (120 aa))) interacts with a nucleoside 3',5'-cyclic phosphate. Residues 568-577 (IERAKVERSS) are compositionally biased toward basic and acidic residues. A disordered region spans residues 568–601 (IERAKVERSSSETAGRSYANDSSKKDPYCSSSNQ). The KHA domain occupies 612–677 (RVTIHMMSES…DGDHLYFSSN (66 aa)).

This sequence belongs to the potassium channel family. Plant (TC 1.A.1.4) subfamily. In terms of assembly, the potassium channel is probably composed of a homo- or heterotetrameric complex of pore-forming subunits. May interact with AKT2 and KAT2. Interacts with SLAC1 and SLAH3. Expressed in guard cells, and in roots.

The protein resides in the membrane. Its function is as follows. Highly selective inward-rectifying potassium channel. This voltage-gated channel could mediate long-term potassium influx into guard cells leading to stomatal opening. Assuming opened or closed conformations in response to the voltage difference across the membrane, the channel is activated by hyperpolarization. The channel activity is enhanced upon external acidification. Also permeable to ammonium ions. Blocked by tetraethylammonium and barium ions. This chain is Potassium channel KAT1 (KAT1), found in Arabidopsis thaliana (Mouse-ear cress).